The chain runs to 1001 residues: MRPPARMPKLTRRSRVLIGVALAAVVLLLIGPRFIDTYVNWLWFGELGYRSVFTTVLFTRVVVFLVVSLLIGAIVFAGLALAYRTRPVFVPTAGPNDPIARYRTTVMARLRLFGFGVPAFIGILSGIVAQSYWVRIQLYLHGGEFGVTDPQFGLDLGFYAFDLPFYRLVLSYLFVATFLAFIANLLGHYLFGGIRLTGRNGALTRSARIQLVTLVGILILLKAFAYWLDRYELLSHTRGGKPFTGAGYTDINAVLPAKLILLAIAVICAVAVFSAIVLRDLRIPAIGVVLLLLSSLVVGAGWPLVVEQFSVKPNAAQKESEYISRSIAATRQAYGLTDEVVTYRDYPGNAPATAQQVAADRSTTSNIRVLDPNIVSPAFTQFQQGKNFYFFPEQLAMDRYRDADGNLRDYVVAARELNPDRLIDNQRDWINRHTVYTHGNGFIASPANTVRGIANDPNQNGGYPEFLASVVGANGNVVSPGPAPLDQPRIYFGPVIANTASDYAIVGENGTPREYDYENNVETRNYTYTGSGGVPIGNWLTRSLFAAKFAERNFLFSNVIGENSKILFNRDPADRVEAVAPWLTTDTTVYPAIVNKKIVWIVDGYTTLDNYPYSELTSLSSATADSNEVAVNRLALNKQVSYIRNSVKATVDAYDGTVTLYAQDETDPVLQAWMKVFPDTIKPKSEISPELQQHLRYPEDLFKVQRALLAKYHVDDPVTFFSTSDFWDVPLDPNPTASSFQPPYYIVAKDLAENNNSAAFQLTSAMNRFRRDFLAAYMSASSDPETYGKITVLTIPGQVNGPKLAFNAISTDTAVSQDLGVIGRDNQNRIRWGNLLTLPVGPGGLLYVAPVYASPGTSDAASTYPRLIRVAMFYNDQVGYGPTVRDALTDLFGAGADATATGPAPANLPDGQPAAQPPNGQQPAAQTPGNQAGRASTPPPAAIPSGPSGPQQLSEAKAAALQEVQEAMSGLQDAQRSGNFAEYGEALQRLDDAMNRYSEAR.

The next 7 helical transmembrane spans lie at 16–36, 61–81, 112–132, 174–194, 209–229, 258–278, and 286–306; these read VLIG…RFID, VVVF…GLAL, LFGF…AQSY, FVAT…FGGI, IQLV…YWLD, KLIL…AIVL, and IGVV…PLVV. Residues 900-929 are compositionally biased toward low complexity; sequence ATGPAPANLPDGQPAAQPPNGQQPAAQTPG. Positions 900–977 are disordered; it reads ATGPAPANLP…MSGLQDAQRS (78 aa).

It belongs to the UPF0182 family.

It is found in the cell membrane. This is UPF0182 protein Mjls_1469 from Mycobacterium sp. (strain JLS).